A 110-amino-acid polypeptide reads, in one-letter code: Large ribosomal subunit protein mL60 (110 aa).

It belongs to the mitochondrion-specific ribosomal protein mL60 family. Component of the mitochondrial large ribosomal subunit (mt-LSU). Mature N.crassa 74S mitochondrial ribosomes consist of a small (37S) and a large (54S) subunit. The 37S small subunit contains a 16S ribosomal RNA (16S mt-rRNA) and 32 different proteins. The 54S large subunit contains a 23S rRNA (23S mt-rRNA) and 42 different proteins.

The protein localises to the mitochondrion. Component of the mitochondrial ribosome (mitoribosome), a dedicated translation machinery responsible for the synthesis of mitochondrial genome-encoded proteins, including at least some of the essential transmembrane subunits of the mitochondrial respiratory chain. The mitoribosomes are attached to the mitochondrial inner membrane and translation products are cotranslationally integrated into the membrane. This Neurospora crassa (strain ATCC 24698 / 74-OR23-1A / CBS 708.71 / DSM 1257 / FGSC 987) protein is Large ribosomal subunit protein mL60 (mrpl31).